The chain runs to 618 residues: C2H2 finger domain transcription factor sebA (618 aa).

Residues 394–488 (GDATQSTEEM…RGRKQSLTDD (95 aa)) form a disordered region. Residues 406–416 (KKRVTSRRSLK) are compositionally biased toward basic residues. Composition is skewed to low complexity over residues 417–432 (KASTSESSSDSLAKKT) and 443–458 (SDTTSTVQQSTASSRQ). Over residues 459–469 (NSTANTSNSES) the composition is skewed to polar residues. C2H2-type zinc fingers lie at residues 493–516 (FVCSLCSRRFRRQEHLKRHYRSLH) and 522–544 (FECHECGKKFSRSDNLAQHARTH). Over residues 582–597 (NAATSKSTTSESSDGT) the composition is skewed to low complexity. The segment at 582–618 (NAATSKSTTSESSDGTISDTSSVGGRPAKKRRRDDHV) is disordered. Over residues 608–618 (PAKKRRRDDHV) the composition is skewed to basic residues.

It localises to the nucleus. The protein localises to the cytoplasm. Functionally, transcription factor that is involved in the response to heat shock, oxidative stress, and poor nutrient conditions. Controls expression of oxidative stress response genes such as ccp1, cat1, cat2, sod2; as well as of heat shock genes such as hsf1, hsp30 and hsp90. Negatively controls the expression of the fumiquinazoline (fmq) cluster via binding to the STRE motifs at the fmqA-D promoters. Plays a role in virulence. In Aspergillus fumigatus (strain ATCC MYA-4609 / CBS 101355 / FGSC A1100 / Af293) (Neosartorya fumigata), this protein is C2H2 finger domain transcription factor sebA.